Here is a 296-residue protein sequence, read N- to C-terminus: (+)-neomenthol dehydrogenase (296 aa).

Residue 16–40 (RGIGFEICRQLASEGIRVVLTSRDE) coordinates NADP(+). Residue serine 164 coordinates substrate. Tyrosine 220 (proton acceptor) is an active-site residue.

Belongs to the short-chain dehydrogenases/reductases (SDR) family. As to quaternary structure, monomer.

The protein localises to the cytoplasm. The catalysed reaction is (+)-neomenthol + NADP(+) = (1R,4S)-menthone + NADPH + H(+). Functionally, aldehyde reductase that catalyzes the reduction of the aldehyde carbonyl groups on saturated and alpha,beta-unsaturated aldehydes with more than 5 carbons. Involved in basal resistance against pathogens. In Arabidopsis thaliana (Mouse-ear cress), this protein is (+)-neomenthol dehydrogenase (SDR1).